Here is a 292-residue protein sequence, read N- to C-terminus: uncharacterized protein (292 aa).

The N-terminal stretch at 1-19 (MFKKYIFILLLLVTSIVKA) is a signal peptide. Residues 271 to 292 (KRNNPPLKTNNAKSKNPYDQSK) are disordered.

This is an uncharacterized protein from Rickettsia bellii (strain RML369-C).